The chain runs to 359 residues: MISKLSVNPTFSPSYNIIVDSVLDFSHILEYVTNKQVLVVTNTTVAKLYLTKFLAALVDDLDVRTCILEDGEQYKSQQSLDKILSTLLENHFTRNSTVLVALGGGVIGDITGFAAAIYQRGIDFIQIPTTLLSQVDSSVGGKTAINHQLGKNMIGAFYQPKVVYTSIEFYKTLPQREYIAGMAEVVKYAFISKDFYLWLDSNRDKILAKDSVTLIEMVKRSCQIKAQVVAMDEKELTGARAILNFGHTFGHAIEKCQNYRGLKHGEAVGVGMAQAIDFSHYLGLISQQQAKDFNDFIVSFGISIDFPNDICQKEFLEAMLLDKKNSNKELKFILIENIGSLSLQKQSKNELEQFLDISR.

Residues 70 to 75, 105 to 109, 129 to 130, Lys-142, Lys-151, and 169 to 172 contribute to the NAD(+) site; these read DGEQYK, GVIGD, TT, and FYKT. Zn(2+) is bound by residues Glu-184, His-247, and His-264.

Belongs to the sugar phosphate cyclases superfamily. Dehydroquinate synthase family. Co(2+) serves as cofactor. Zn(2+) is required as a cofactor. Requires NAD(+) as cofactor.

It localises to the cytoplasm. It carries out the reaction 7-phospho-2-dehydro-3-deoxy-D-arabino-heptonate = 3-dehydroquinate + phosphate. It participates in metabolic intermediate biosynthesis; chorismate biosynthesis; chorismate from D-erythrose 4-phosphate and phosphoenolpyruvate: step 2/7. Catalyzes the conversion of 3-deoxy-D-arabino-heptulosonate 7-phosphate (DAHP) to dehydroquinate (DHQ). The chain is 3-dehydroquinate synthase from Francisella tularensis subsp. tularensis (strain FSC 198).